The chain runs to 353 residues: Photosystem II protein D1 (353 aa).

Residue threonine 2 is modified to N-acetylthreonine. Position 2 is a phosphothreonine (threonine 2). The next 3 helical transmembrane spans lie at 29-46 (YIGWFGVLMIPTLLTATS), 118-133 (HFLLGVACYMGREWEL), and 142-156 (WIAVAYSAPVAAATA). Histidine 118 provides a ligand contact to chlorophyll a. A pheophytin a-binding site is contributed by tyrosine 126. Positions 170 and 189 each coordinate [CaMn4O5] cluster. Residues 197 to 218 (FHMLGVAGVFGGSLFSAMHGSL) form a helical membrane-spanning segment. Residue histidine 198 participates in chlorophyll a binding. A quinone is bound by residues histidine 215 and 264-265 (SF). Fe cation is bound at residue histidine 215. Residue histidine 272 coordinates Fe cation. The chain crosses the membrane as a helical span at residues 274–288 (FLAAWPVVGIWFTAL). The [CaMn4O5] cluster site is built by histidine 332, glutamate 333, aspartate 342, and alanine 344. Positions 345–353 (AVEVPSING) are excised as a propeptide.

Belongs to the reaction center PufL/M/PsbA/D family. PSII is composed of 1 copy each of membrane proteins PsbA, PsbB, PsbC, PsbD, PsbE, PsbF, PsbH, PsbI, PsbJ, PsbK, PsbL, PsbM, PsbT, PsbX, PsbY, PsbZ, Psb30/Ycf12, at least 3 peripheral proteins of the oxygen-evolving complex and a large number of cofactors. It forms dimeric complexes. The D1/D2 heterodimer binds P680, chlorophylls that are the primary electron donor of PSII, and subsequent electron acceptors. It shares a non-heme iron and each subunit binds pheophytin, quinone, additional chlorophylls, carotenoids and lipids. D1 provides most of the ligands for the Mn4-Ca-O5 cluster of the oxygen-evolving complex (OEC). There is also a Cl(-1) ion associated with D1 and D2, which is required for oxygen evolution. The PSII complex binds additional chlorophylls, carotenoids and specific lipids. serves as cofactor. Post-translationally, tyr-161 forms a radical intermediate that is referred to as redox-active TyrZ, YZ or Y-Z. C-terminally processed by CTPA; processing is essential to allow assembly of the oxygen-evolving complex and thus photosynthetic growth.

The protein resides in the plastid. It localises to the chloroplast thylakoid membrane. It catalyses the reaction 2 a plastoquinone + 4 hnu + 2 H2O = 2 a plastoquinol + O2. Its function is as follows. Photosystem II (PSII) is a light-driven water:plastoquinone oxidoreductase that uses light energy to abstract electrons from H(2)O, generating O(2) and a proton gradient subsequently used for ATP formation. It consists of a core antenna complex that captures photons, and an electron transfer chain that converts photonic excitation into a charge separation. The D1/D2 (PsbA/PsbD) reaction center heterodimer binds P680, the primary electron donor of PSII as well as several subsequent electron acceptors. The chain is Photosystem II protein D1 from Triticum aestivum (Wheat).